The chain runs to 464 residues: Protein FAM90A23 (464 aa).

Disordered regions lie at residues 1–42 (MMAR…DPRL), 69–389 (VPAT…HDGA), and 415–437 (HSPE…SEAP). Composition is skewed to basic and acidic residues over residues 74-89 (GKKE…KPRA) and 97-114 (NKDK…DPQR). Residues 180 to 197 (LASLSPLRKASLSSSSSL) show a composition bias toward low complexity.

The protein belongs to the FAM90 family.

The protein is Protein FAM90A23 of Homo sapiens (Human).